Here is a 625-residue protein sequence, read N- to C-terminus: Probable potassium transport system protein Kup 2 (625 aa).

The next 12 membrane-spanning stretches (helical) occupy residues 15–35 (LSFAALGVVFGDIGTSPLYAF), 52–72 (ILSLIFWSLIIIVSIKYLVIV), 98–118 (GGWLLFITLVGIGLIIGDGIL), 134–154 (LSPNLAKYVLPVTLIILFFLF), 164–184 (IGIYFAPVMLIWFITIGVLGF), 203–223 (IYFFMIHKYFALFILGGVFLV), 246–266 (WFAVALPALLLCYFGQGAFVL), 284–304 (FLPVMIILATIATIIASQAII), 336–356 (VYLPLINFILALGTCSLVVIF), 365–385 (AYGIAVNLDMLITTVLVGIIA), 394–414 (FKVMIFPLILVIELAFFAGNI), and 417–437 (LLTGGWIPILIAFLGFVVMYT).

This sequence belongs to the HAK/KUP transporter (TC 2.A.72) family.

Its subcellular location is the cell inner membrane. The catalysed reaction is K(+)(in) + H(+)(in) = K(+)(out) + H(+)(out). In terms of biological role, transport of potassium into the cell. Likely operates as a K(+):H(+) symporter. This Legionella pneumophila subsp. pneumophila (strain Philadelphia 1 / ATCC 33152 / DSM 7513) protein is Probable potassium transport system protein Kup 2.